Consider the following 384-residue polypeptide: 8-amino-7-oxononanoate synthase (384 aa).

Substrate is bound at residue arginine 21. Position 108–109 (108–109 (GF)) interacts with pyridoxal 5'-phosphate. Histidine 133 contributes to the substrate binding site. Serine 179, histidine 207, and threonine 233 together coordinate pyridoxal 5'-phosphate. Lysine 236 is subject to N6-(pyridoxal phosphate)lysine. Substrate is bound at residue threonine 352.

This sequence belongs to the class-II pyridoxal-phosphate-dependent aminotransferase family. BioF subfamily. As to quaternary structure, homodimer. The cofactor is pyridoxal 5'-phosphate.

The catalysed reaction is 6-carboxyhexanoyl-[ACP] + L-alanine + H(+) = (8S)-8-amino-7-oxononanoate + holo-[ACP] + CO2. It functions in the pathway cofactor biosynthesis; biotin biosynthesis. Its function is as follows. Catalyzes the decarboxylative condensation of pimeloyl-[acyl-carrier protein] and L-alanine to produce 8-amino-7-oxononanoate (AON), [acyl-carrier protein], and carbon dioxide. The polypeptide is 8-amino-7-oxononanoate synthase (Shigella dysenteriae serotype 1 (strain Sd197)).